The chain runs to 1189 residues: Disabled homolog 2-interacting protein (1189 aa).

The disordered stretch occupies residues 1-75 (MSAGGNARKS…EPSASTPFRV (75 aa)). Over residues 20–38 (LLRRPRLQRQRSRSRSRTR) the composition is skewed to basic residues. The span at 39–49 (PARESPQERPG) shows a compositional bias: basic and acidic residues. Positions 59–73 (SEKNPSMEPSASTPF) are enriched in polar residues. Residues 101-202 (SFRHILPGFR…WMENLRRAVH (102 aa)) enclose the PH domain. The 119-residue stretch at 193–311 (WMENLRRAVH…AGRQFVEKWY (119 aa)) folds into the C2 domain. A Ras-GAP domain is found at 387–595 (GKVKDFLTDL…TNMQRFLLEI (209 aa)). The segment at 646-943 (LRDVHTALST…RTPPTLLSTL (298 aa)) is necessary for interaction with AKT1. Residues 653–668 (LSTPGSGQLPGTNDLA) show a composition bias toward polar residues. Disordered stretches follow at residues 653-679 (LSTP…SSVS) and 715-738 (RSSG…PDLQ). Residues 669–679 (STPGSGSSSVS) show a composition bias toward low complexity. Residues 715–731 (RSSGVQPSPARSSSYSE) show a composition bias toward polar residues. Ser728 carries the phosphoserine; by MAP3K5 and RIPK1 modification. Ser747 carries the post-translational modification Phosphoserine. Disordered regions lie at residues 804 to 823 (VPTP…PQLL), 843 to 865 (PRGL…NSEE), 895 to 998 (SLTE…SPNA), 1015 to 1034 (EDEG…SKEE), and 1163 to 1189 (ARNG…SSNC). Residues 852-865 (EGHSSLSSHSNSEE) show a composition bias toward low complexity. Residues 919–931 (QPPPPPPPPPPAP) are compositionally biased toward pro residues. 2 stretches are compositionally biased toward polar residues: residues 939–955 (LLST…TLAS) and 967–976 (LRQQSSSSKG). 2 positions are modified to phosphoserine: Ser978 and Ser995. The segment covering 1023–1034 (PPHRDRLRSKEE) has biased composition (basic and acidic residues). The stretch at 1025 to 1159 (HRDRLRSKEE…SALTQLKERY (135 aa)) forms a coiled coil.

As to quaternary structure, on plasma membrane, exists in an inactive form complexed with TNFR1; in response to TNF-alpha, dissociates from TNFR1 complex, translocates to cytoplasm and forms part of an intracellular signaling complex comprising TRADD, RIPK1, TRAF2 and MAP3K5. Interacts with DAB1. Part of a cytoplasmic complex made of HIPK1, DAB2IP and MAP3K5 in response to TNF-alpha; this complex formation promotes MAP3K5-JNK activation and subsequent apoptosis. Interacts (via N-terminal domain) with JAK2; the interaction occurs in a IFNG/IFN-gamma-dependent manner and inhibits JAK2 autophosphorylation activity. Interacts (via C2 domain) with GSK3B; the interaction stimulates GSK3B kinase activation. Interacts (via C2 domain) with PPP2CA. Interacts (via proline-rich motif) with a regulatory p85 subunit (via SH3 domain) of the PI3K complex; the interaction inhibits the PI3K-AKT complex activity in a TNF-alpha-dependent manner in prostate cancer (PCa) cells. Interacts with AKT1; the interaction is increased in a TNF-alpha-induced manner. Interacts (via C2 domain and active form preferentially) with KDR/VEGFR2 (tyrosine-phosphorylated active form preferentially); the interaction occurs at the late phase of VEGFA response and inhibits KDR/VEGFR2 activity. Interacts (via N-terminus C2 domain) with MAP3K5 ('Ser-966' dephosphorylated form preferentially); the interaction occurs in a TNF-alpha-induced manner. Interacts (via Ras-GAP domain) with the catalytic subunit of protein phosphatase PP2A; the interaction occurs in resting endothelial cells, is further enhanced by TNF-alpha stimulation and is required to bridge PP2A to MAP3K5. Interacts (via C-terminus PER domain) with TRAF2 (via zinc fingers); the interaction occurs in a TNF-alpha-dependent manner. Interacts with 14-3-3 proteins; the interaction occurs in a TNF-alpha-dependent manner. Interacts (via Ras-GAP domain) with RIPK1 (via kinase domain); the interaction occurs in a TNF-alpha-dependent manner. Interacts (via PH domain) with ERN1. Interacts with TRAF2. Interacts (via NPXY motif) with DAB2 (via PID domain). Interacts with RAB40C; acts as a GAP for RAB40C. Post-translationally, in response to TNF-alpha-induction, phosphorylated at Ser-728; phosphorylation leads to a conformational change, and thus, increases its association with 14-3-3 proteins, MAP3K5, RIPK1 and TRAF2 in endothelial cells; also stimulates regulatory p85 subunit sequestring and PI3K-p85 complex activity inhibition. As to expression, expressed in vascular endothelium of muscle and aorta, in smooth muscle cells of aorta and epithelial cells of lung. Expressed throughout the brain, including olfactory bulb, hypothalamus, cerebellum and cerebral cortex. Expressed in the soma and processes of neurons in a variety of brain structures, including the developing cerebral cortex, CA1 pyramidal neurons and Purkinje cells. Poorly expressed in medulloblastoma cells compared to cerebellar precursor proliferating progenitor cells (at protein level). Highly expressed in the brain, salivary gland, and testis; moderate expression in kidney and heart. Low expression in the lung, seminal vesicle, ventral prostate, epididymis, liver, and bladder. Very low expression in the coagulation gland and skeleton muscles. Lowest expression seen in spleen.

The protein localises to the cytoplasm. Its subcellular location is the cell membrane. The protein resides in the membrane. It localises to the cell projection. It is found in the dendrite. Its function is as follows. Functions as a scaffold protein implicated in the regulation of a large spectrum of both general and specialized signaling pathways. Involved in several processes such as innate immune response, inflammation and cell growth inhibition, apoptosis, cell survival, angiogenesis, cell migration and maturation. Also plays a role in cell cycle checkpoint control; reduces G1 phase cyclin levels resulting in G0/G1 cell cycle arrest. Mediates signal transduction by receptor-mediated inflammatory signals, such as the tumor necrosis factor (TNF), interferon (IFN) or lipopolysaccharide (LPS). Modulates the balance between phosphatidylinositol 3-kinase (PI3K)-AKT-mediated cell survival and apoptosis stimulated kinase (MAP3K5)-JNK signaling pathways; sequesters both AKT1 and MAP3K5 and counterbalances the activity of each kinase by modulating their phosphorylation status in response to pro-inflammatory stimuli. Acts as a regulator of the endoplasmic reticulum (ER) unfolded protein response (UPR) pathway; specifically involved in transduction of the ER stress-response to the JNK cascade through ERN1. Mediates TNF-alpha-induced apoptosis activation by facilitating dissociation of inhibitor 14-3-3 from MAP3K5; recruits the PP2A phosphatase complex which dephosphorylates MAP3K5 on 'Ser-966', leading to the dissociation of 13-3-3 proteins and activation of the MAP3K5-JNK signaling pathway in endothelial cells. Also mediates TNF/TRAF2-induced MAP3K5-JNK activation, while it inhibits CHUK-NF-kappa-B signaling. Acts a negative regulator in the IFN-gamma-mediated JAK-STAT signaling cascade by inhibiting smooth muscle cell (VSMCs) proliferation and intimal expansion, and thus, prevents graft arteriosclerosis (GA). Acts as a GTPase-activating protein (GAP) for the ADP ribosylation factor 6 (ARF6) and Ras. Promotes hydrolysis of the ARF6-bound GTP and thus, negatively regulates phosphatidylinositol 4,5-bisphosphate (PIP2)-dependent TLR4-TIRAP-MyD88 and NF-kappa-B signaling pathways in endothelial cells in response to lipopolysaccharides (LPS). Binds specifically to phosphatidylinositol 4-phosphate (PtdIns4P) and phosphatidylinositol 3-phosphate (PtdIns3P). In response to vascular endothelial growth factor (VEGFA), acts as a negative regulator of the VEGFR2-PI3K-mediated angiogenic signaling pathway by inhibiting endothelial cell migration and tube formation. In the developing brain, promotes both the transition from the multipolar to the bipolar stage and the radial migration of cortical neurons from the ventricular zone toward the superficial layer of the neocortex in a glial-dependent locomotion process. Probable downstream effector of the Reelin signaling pathway; promotes Purkinje cell (PC) dendrites development and formation of cerebellar synapses. Also functions as a tumor suppressor protein in prostate cancer progression; prevents cell proliferation and epithelial-to-mesenchymal transition (EMT) through activation of the glycogen synthase kinase-3 beta (GSK3B)-induced beta-catenin and inhibition of PI3K-AKT and Ras-MAPK survival downstream signaling cascades, respectively. This is Disabled homolog 2-interacting protein (Dab2ip) from Mus musculus (Mouse).